The sequence spans 381 residues: Creatine kinase M-type (381 aa).

Residues 11–98 (KLNFKAEEEY…FDPIIQDRHG (88 aa)) enclose the Phosphagen kinase N-terminal domain. Positions 125–367 (YVLSSRVRTG…KLMVEMEKKL (243 aa)) constitute a Phosphagen kinase C-terminal domain. 128–132 (SSRVR) contributes to the ATP binding site. Position 164 is a phosphoserine (Ser164). Thr166 is subject to Phosphothreonine. Ser178 carries the post-translational modification Phosphoserine. Thr180 is subject to Phosphothreonine. His191 lines the ATP pocket. The residue at position 199 (Ser199) is a Phosphoserine. 2 residues coordinate ATP: Arg236 and Arg292. Thr313 and Thr322 each carry phosphothreonine. Residues 320–325 (RGTGGV) and Asp335 each bind ATP. Residue Ser372 is modified to Phosphoserine.

Belongs to the ATP:guanido phosphotransferase family. As to quaternary structure, dimer of identical or non-identical chains, which can be either B (brain type) or M (muscle type). With MM being the major form in skeletal muscle and myocardium, MB existing in myocardium, and BB existing in many tissues, especially brain.

It catalyses the reaction creatine + ATP = N-phosphocreatine + ADP + H(+). In terms of biological role, reversibly catalyzes the transfer of phosphate between ATP and various phosphogens (e.g. creatine phosphate). Creatine kinase isoenzymes play a central role in energy transduction in tissues with large, fluctuating energy demands, such as skeletal muscle, heart, brain and spermatozoa. This Sus scrofa (Pig) protein is Creatine kinase M-type (CKM).